We begin with the raw amino-acid sequence, 455 residues long: Retinoic acid receptor beta (455 aa).

The interval 1-87 (MTTSGHACPV…PLPPPRVYKP (87 aa)) is modulating. Positions 47 to 78 (HPPPSGCSTPSPATIETQSTSSEELVPSPPSP) are disordered. Positions 53–66 (CSTPSPATIETQST) are enriched in polar residues. Ser-77 is modified (phosphoserine). NR C4-type zinc fingers lie at residues 88–108 (CFVCQDKSSGYHYGVSACEGC) and 124–148 (CHRDKNCVINKVTRNRCQYCRLQKC). Positions 88–153 (CFVCQDKSSG…RLQKCFEVGM (66 aa)) form a DNA-binding region, nuclear receptor. The segment at 154-182 (SKESVRNDRNKKKKETSKQECTESYEMTA) is hinge. The NR LBD domain occupies 183–417 (ELDDLTEKIR…PLIQEMLENS (235 aa)). The disordered stretch occupies residues 415–455 (ENSEGHEPLTPSSSGNTAEHSPSISPSSVENSGVSQSPLVQ). Residues 424–434 (TPSSSGNTAEH) show a composition bias toward polar residues. A compositionally biased stretch (low complexity) spans 435-455 (SPSISPSSVENSGVSQSPLVQ).

This sequence belongs to the nuclear hormone receptor family. NR1 subfamily. As to quaternary structure, homodimer. Heterodimer; with a RXR molecule. Binds DNA preferentially as a RAR/RXR heterodimer. Heterodimerizes (via NR LBD) with RXRA. Interacts weakly with NCOR2. As to expression, expressed in aortic endothelial cells (at protein level).

The protein localises to the nucleus. Its subcellular location is the cytoplasm. In terms of biological role, receptor for retinoic acid. Retinoic acid receptors bind as heterodimers to their target response elements in response to their ligands, all-trans or 9-cis retinoic acid, and regulate gene expression in various biological processes. The RXR/RAR heterodimers bind to the retinoic acid response elements (RARE) composed of tandem 5'-AGGTCA-3' sites known as DR1-DR5. In the absence or presence of hormone ligand, acts mainly as an activator of gene expression due to weak binding to corepressors. The RXRA/RARB heterodimer can act as a repressor on the DR1 element and as an activator on the DR5 element. In concert with RARG, required for skeletal growth, matrix homeostasis and growth plate function. This is Retinoic acid receptor beta (RARB) from Homo sapiens (Human).